A 416-amino-acid chain; its full sequence is Tryptophan synthase beta chain (416 aa).

Lys-98 is modified (N6-(pyridoxal phosphate)lysine).

It belongs to the TrpB family. As to quaternary structure, tetramer of two alpha and two beta chains. It depends on pyridoxal 5'-phosphate as a cofactor.

It carries out the reaction (1S,2R)-1-C-(indol-3-yl)glycerol 3-phosphate + L-serine = D-glyceraldehyde 3-phosphate + L-tryptophan + H2O. It functions in the pathway amino-acid biosynthesis; L-tryptophan biosynthesis; L-tryptophan from chorismate: step 5/5. Functionally, the beta subunit is responsible for the synthesis of L-tryptophan from indole and L-serine. The protein is Tryptophan synthase beta chain of Ruegeria pomeroyi (strain ATCC 700808 / DSM 15171 / DSS-3) (Silicibacter pomeroyi).